The following is a 292-amino-acid chain: Phosphatidylserine decarboxylase proenzyme (292 aa).

Catalysis depends on charge relay system; for autoendoproteolytic cleavage activity residues aspartate 89, histidine 146, and serine 252. Serine 252 serves as the catalytic Schiff-base intermediate with substrate; via pyruvic acid; for decarboxylase activity. The residue at position 252 (serine 252) is a Pyruvic acid (Ser); by autocatalysis.

The protein belongs to the phosphatidylserine decarboxylase family. PSD-B subfamily. Prokaryotic type I sub-subfamily. In terms of assembly, heterodimer of a large membrane-associated beta subunit and a small pyruvoyl-containing alpha subunit. Pyruvate serves as cofactor. In terms of processing, is synthesized initially as an inactive proenzyme. Formation of the active enzyme involves a self-maturation process in which the active site pyruvoyl group is generated from an internal serine residue via an autocatalytic post-translational modification. Two non-identical subunits are generated from the proenzyme in this reaction, and the pyruvate is formed at the N-terminus of the alpha chain, which is derived from the carboxyl end of the proenzyme. The autoendoproteolytic cleavage occurs by a canonical serine protease mechanism, in which the side chain hydroxyl group of the serine supplies its oxygen atom to form the C-terminus of the beta chain, while the remainder of the serine residue undergoes an oxidative deamination to produce ammonia and the pyruvoyl prosthetic group on the alpha chain. During this reaction, the Ser that is part of the protease active site of the proenzyme becomes the pyruvoyl prosthetic group, which constitutes an essential element of the active site of the mature decarboxylase.

The protein resides in the cell membrane. The enzyme catalyses a 1,2-diacyl-sn-glycero-3-phospho-L-serine + H(+) = a 1,2-diacyl-sn-glycero-3-phosphoethanolamine + CO2. The protein operates within phospholipid metabolism; phosphatidylethanolamine biosynthesis; phosphatidylethanolamine from CDP-diacylglycerol: step 2/2. In terms of biological role, catalyzes the formation of phosphatidylethanolamine (PtdEtn) from phosphatidylserine (PtdSer). The sequence is that of Phosphatidylserine decarboxylase proenzyme from Shewanella baltica (strain OS223).